The sequence spans 306 residues: MIFQRTVKEMVKTTGVGLHSGNKVTLIIKPAPVNTGIMLVRTDLSPAVEIPAVAEQVRETTMCTALVNDDGVRISTIEHLFAALAGLGIDNAIIEVDAPEIPIMDGSASPFVFLLQSVGIEEQAAAKKYIKITKPIRVEDGDKWAELKPFKGFRVDFAIDFNHPEIARSQQHMVMDFSSSAFVKDISRARTFGFMRDIEYLRANNLALGGSMENAVVLDEYRVLNPDGLRYEDEFVKHKILDAFGDLYVAGHAIVGEFCAYKTGHALNNQLVRAMLAQQDAWEIVSFEKEADAPVSFSVPSGAVFA.

Positions 79, 238, and 242 each coordinate Zn(2+). H265 (proton donor) is an active-site residue.

This sequence belongs to the LpxC family. It depends on Zn(2+) as a cofactor.

It catalyses the reaction a UDP-3-O-[(3R)-3-hydroxyacyl]-N-acetyl-alpha-D-glucosamine + H2O = a UDP-3-O-[(3R)-3-hydroxyacyl]-alpha-D-glucosamine + acetate. The protein operates within glycolipid biosynthesis; lipid IV(A) biosynthesis; lipid IV(A) from (3R)-3-hydroxytetradecanoyl-[acyl-carrier-protein] and UDP-N-acetyl-alpha-D-glucosamine: step 2/6. In terms of biological role, catalyzes the hydrolysis of UDP-3-O-myristoyl-N-acetylglucosamine to form UDP-3-O-myristoylglucosamine and acetate, the committed step in lipid A biosynthesis. This chain is UDP-3-O-acyl-N-acetylglucosamine deacetylase, found in Shewanella piezotolerans (strain WP3 / JCM 13877).